We begin with the raw amino-acid sequence, 258 residues long: Steroid 5-alpha-reductase DET2 (258 aa).

The next 6 helical transmembrane spans lie at 8–28, 49–69, 77–97, 109–129, 144–164, and 201–221; these read FHYC…SLYF, LAWF…FPSG, SFLL…LYPL, FPVS…YLQA, LFWW…WVNV, and IMEW…GFFL.

Belongs to the steroid 5-alpha reductase family. As to expression, accumulates in fibers (seed trichomes) during both their initiation and elongation phases. Also present in roots, hypocotyls, leaves, flowers and ovules, and barely in cotyledons.

It is found in the membrane. The enzyme catalyses a 3-oxo-5alpha-steroid + NADP(+) = a 3-oxo-Delta(4)-steroid + NADPH + H(+). Its pathway is plant hormone biosynthesis; brassinosteroid biosynthesis. In terms of biological role, involved in a reduction step in the biosynthesis of the plant steroid, brassinolide (BL). Promotes cotton fibers (seed trichomes) initiation and elongation. The chain is Steroid 5-alpha-reductase DET2 from Gossypium hirsutum (Upland cotton).